Consider the following 260-residue polypeptide: Snake venom serine protease homolog 1 (260 aa).

Residues 1–18 (MVLIRVLANLLLLQLSYA) form the signal peptide. Residues 19 to 24 (QESSEL) constitute a propeptide that is removed on maturation. The 227-residue stretch at 25–251 (VIGGDECDIN…YTDWIEGIIA (227 aa)) folds into the Peptidase S1 domain. Intrachain disulfides connect Cys-31/Cys-165, Cys-52/Cys-68, Cys-100/Cys-258, Cys-144/Cys-212, Cys-176/Cys-191, and Cys-202/Cys-227. The N-linked (GlcNAc...) asparagine glycan is linked to Asn-253.

This sequence belongs to the peptidase S1 family. Snake venom subfamily. In terms of tissue distribution, expressed by the venom gland.

It localises to the secreted. Its function is as follows. Snake venom serine protease homolog that may act in the hemostasis system of the prey. The chain is Snake venom serine protease homolog 1 from Bitis gabonica (Gaboon adder).